We begin with the raw amino-acid sequence, 323 residues long: MKNQSSFSIVALLLIFFSSSVFAQLQTNFYRKSCPNVETIVRNAVRQKFQQTFVTAPATLRLFFHDCFVRGCDASILLASPSEKDHPDDKSLAGDGFDTVAKAKQALDRDPNCRNKVSCADILALATRDVVVLTGGPNYPVELGRRDGRLSTVASVQHSLPQPSFKLDQLNTMFARHGLSQTDMIALSGAHTIGFAHCGKFSKRIYNFSPKRPIDPTLNIRYALQLRQMCPIRVDLRIAINMDPTSPNTFDNAYFKNLQKGMGLFTSDQVLFSDERSRSTVNSFASSEATFRQAFISAITKLGRVGVKTGNAGEIRRDCSRVN.

Positions 1-23 (MKNQSSFSIVALLLIFFSSSVFA) are cleaved as a signal peptide. Cystine bridges form between cysteine 34/cysteine 113, cysteine 67/cysteine 72, cysteine 119/cysteine 319, and cysteine 198/cysteine 230. Catalysis depends on histidine 65, which acts as the Proton acceptor. Residues aspartate 66, valine 69, glycine 71, aspartate 73, and serine 75 each coordinate Ca(2+). Proline 161 contacts substrate. Residue histidine 191 coordinates heme b. Threonine 192 provides a ligand contact to Ca(2+). Aspartate 243, serine 246, and aspartate 251 together coordinate Ca(2+).

Belongs to the peroxidase family. Classical plant (class III) peroxidase subfamily. The cofactor is heme b. Ca(2+) is required as a cofactor. In terms of tissue distribution, expressed in the whole plant, but preferentially in roots and leaves.

The protein resides in the secreted. The catalysed reaction is 2 a phenolic donor + H2O2 = 2 a phenolic radical donor + 2 H2O. Its function is as follows. Removal of H(2)O(2), oxidation of toxic reductants, biosynthesis and degradation of lignin, suberization, auxin catabolism, response to environmental stresses such as wounding, pathogen attack and oxidative stress. These functions might be dependent on each isozyme/isoform in each plant tissue. The sequence is that of Peroxidase 16 (PER16) from Arabidopsis thaliana (Mouse-ear cress).